We begin with the raw amino-acid sequence, 180 residues long: Large ribosomal subunit protein eL20 (180 aa).

Belongs to the eukaryotic ribosomal protein eL20 family.

The polypeptide is Large ribosomal subunit protein eL20 (Caenorhabditis elegans).